A 446-amino-acid polypeptide reads, in one-letter code: Maltoporin (446 aa).

An N-terminal signal peptide occupies residues 1–25 (MMITLRKLPLAVAVAAGVMSAQAMA).

This sequence belongs to the porin LamB (TC 1.B.3) family. In terms of assembly, homotrimer formed of three 18-stranded antiparallel beta-barrels, containing three independent channels.

It localises to the cell outer membrane. The catalysed reaction is beta-maltose(in) = beta-maltose(out). Functionally, involved in the transport of maltose and maltodextrins. The sequence is that of Maltoporin from Escherichia coli (strain SE11).